Reading from the N-terminus, the 735-residue chain is MKTPKTLPEVTLSWEISADEITAILAGSHSNPFAVLGVHQGGDAFVARCFIPGAEEVTAMTLDGGFIGELKQLHADGVFAGPVSLAKLQPVRYRARRGDAEWAVTDPYSFGPVLGPMDDYFAREGSHLRLFDKMGAHLIKHEGAQGIHFAVWAPNAQRVSVVGDFNGWDGRRHVMRFRADSGIWEIFAPDVPLGVAYKFEIRGHDGVLLPLKADPFARRSELRPKTASIAAAELEQVWEDEAHLKHWRETDKRRQPISIYEVHAGSWQRRQDGTMLSWDELASSLIPYCVDMGFTHIEFLPITEHPYDPSWGYQTTGLYAPTARFGEPEGFARFVNGCHKVGIGVILDWVPAHFPTDEHGLGWFDGTALYEHEDPRKGFHPDWNTAIYNFGRTEVVSYLVNNALYWAEKFHLDGLRVDAVASMLYLDYSRKHGEWIPNEYGGNENLEAVRFLQDLNIRIYGQHSNVMTIAEESTSWPKVSQPVHEGGLGFGFKWNMGFMHDTLSYMKRDPVHRKHHHNELTFGLLYAYSENFVLPLSHDEVVHGKGSLIAKMPGDDWQKFANLRAYYAYMWGYPGKKLLFMGQEFAQWSEWSEAKSLDWNLLQYRMHEGMRRLVRDLNFTYRSKPALHERDCEGEGFEWLVADDHQNSVFAWLRKAPGQKPVAVITNFTPVYRENYTIRLPSAGRWREILNTDADIYGGSGKGNGGRVQAVDAGGDITCSITLPPLATIMLEPEN.

Residue Asp-418 is the Nucleophile of the active site. Residue Glu-471 is the Proton donor of the active site.

The protein belongs to the glycosyl hydrolase 13 family. GlgB subfamily. In terms of assembly, monomer.

The catalysed reaction is Transfers a segment of a (1-&gt;4)-alpha-D-glucan chain to a primary hydroxy group in a similar glucan chain.. It participates in glycan biosynthesis; glycogen biosynthesis. Functionally, catalyzes the formation of the alpha-1,6-glucosidic linkages in glycogen by scission of a 1,4-alpha-linked oligosaccharide from growing alpha-1,4-glucan chains and the subsequent attachment of the oligosaccharide to the alpha-1,6 position. The protein is 1,4-alpha-glucan branching enzyme GlgB 1 of Rhizobium etli (strain ATCC 51251 / DSM 11541 / JCM 21823 / NBRC 15573 / CFN 42).